The chain runs to 100 residues: RNA-binding protein YlxQ (100 aa).

This sequence belongs to the eukaryotic ribosomal protein eL8 family.

Functionally, RNA-binding protein that recognizes the K-turn motif present in ribosomal RNA, but also in box C/D and box C'/D' sRNAs. In Bacillus subtilis (strain 168), this protein is RNA-binding protein YlxQ.